The chain runs to 209 residues: MAVFKTLTDADMAIFSTGLVAGVDEVGRGPLVGDVVTAAVILDPNRPIAGLNDSKKLTEKRREALFDEICEKALSFHVGRASPAEIDELNILHATMLAMQRAVAGLSLTPELVLVDGNRSPAFNHAGQALTSHSIVKGDGLIASISAASIIAKVTRDREMDALDAAYPQYGFAKHKGYPTKAHFDAIAEHGVFDQYRKSFKPVKALLER.

The RNase H type-2 domain occupies G18 to R209. D24, E25, and D116 together coordinate a divalent metal cation.

This sequence belongs to the RNase HII family. Mn(2+) is required as a cofactor. Mg(2+) serves as cofactor.

The protein localises to the cytoplasm. The catalysed reaction is Endonucleolytic cleavage to 5'-phosphomonoester.. Functionally, endonuclease that specifically degrades the RNA of RNA-DNA hybrids. The protein is Ribonuclease HII of Shewanella sp. (strain MR-7).